A 100-amino-acid polypeptide reads, in one-letter code: Sweet protein mabinlin-4 (100 aa).

4 disulfides stabilise this stretch: Cys-4–Cys-49, Cys-17–Cys-38, Cys-39–Cys-87, and Cys-51–Cys-95.

It belongs to the 2S seed storage albumins family. Heterodimer of a small A and a large B chain linked by disulfide bonds.

Its function is as follows. Heat stable 2S seed storage protein having sweetness-inducing activity. This chain is Sweet protein mabinlin-4, found in Capparis masaikai (Mabinlang).